A 103-amino-acid chain; its full sequence is Small ribosomal subunit protein uS10 (103 aa).

This sequence belongs to the universal ribosomal protein uS10 family. In terms of assembly, part of the 30S ribosomal subunit.

Functionally, involved in the binding of tRNA to the ribosomes. This chain is Small ribosomal subunit protein uS10, found in Alkalilimnicola ehrlichii (strain ATCC BAA-1101 / DSM 17681 / MLHE-1).